Reading from the N-terminus, the 400-residue chain is MQCDRLWHNARLATLAESRPGLGLVEDGVIAARDGRILHAGPTAEAPSFAARETIDCEGRWITPGLIDCHTHLVFGGDRAQEFEARLAGASYEEIARAGGGIVSTVRATRAASEDDLVAGALRRLDALIAEGVTTVEVKSGYGLSLAAERASLRAARRLGAERDVTVTTTFLGAHALPPEESDRDRFIDRICAEMLPAIAQEGLADAVDAFCEGIAFSPVETARVFEAARDAGLPVKLHADQLSNLGGAALAARFGALSADHLEYTDEAGAAAMAQAGTVAVLLPGAFYFIRETKVPPVDLFRRHGTRIALATDCNPGTSPLTSLLLVLNMGATLFRLTVEECLAGVTREAARALGRLHDLGTLEAGKWCDLAIWDIERPAELVYRMGFNPLHARIRRGR.

Fe(3+) contacts are provided by histidine 70 and histidine 72. Zn(2+)-binding residues include histidine 70 and histidine 72. Positions 79, 142, and 175 each coordinate 4-imidazolone-5-propanoate. Position 142 (tyrosine 142) interacts with N-formimidoyl-L-glutamate. Histidine 239 contacts Fe(3+). Histidine 239 provides a ligand contact to Zn(2+). Glutamine 242 is a 4-imidazolone-5-propanoate binding site. A Fe(3+)-binding site is contributed by aspartate 314. Aspartate 314 is a Zn(2+) binding site. N-formimidoyl-L-glutamate-binding residues include asparagine 316 and glycine 318. Threonine 319 contacts 4-imidazolone-5-propanoate.

The protein belongs to the metallo-dependent hydrolases superfamily. HutI family. It depends on Zn(2+) as a cofactor. Fe(3+) serves as cofactor.

It localises to the cytoplasm. The catalysed reaction is 4-imidazolone-5-propanoate + H2O = N-formimidoyl-L-glutamate. The protein operates within amino-acid degradation; L-histidine degradation into L-glutamate; N-formimidoyl-L-glutamate from L-histidine: step 3/3. In terms of biological role, catalyzes the hydrolytic cleavage of the carbon-nitrogen bond in imidazolone-5-propanoate to yield N-formimidoyl-L-glutamate. It is the third step in the universal histidine degradation pathway. The sequence is that of Imidazolonepropionase from Methylobacterium nodulans (strain LMG 21967 / CNCM I-2342 / ORS 2060).